We begin with the raw amino-acid sequence, 38 residues long: Cytochrome b6-f complex subunit 5 (38 aa).

The chain crosses the membrane as a helical span at residues 5–25; sequence LLLGIVLGLIPVTLAGLFVAA.

Belongs to the PetG family. As to quaternary structure, the 4 large subunits of the cytochrome b6-f complex are cytochrome b6, subunit IV (17 kDa polypeptide, PetD), cytochrome f and the Rieske protein, while the 4 small subunits are PetG, PetL, PetM and PetN. The complex functions as a dimer.

The protein localises to the cellular thylakoid membrane. Its function is as follows. Component of the cytochrome b6-f complex, which mediates electron transfer between photosystem II (PSII) and photosystem I (PSI), cyclic electron flow around PSI, and state transitions. PetG is required for either the stability or assembly of the cytochrome b6-f complex. In Synechocystis sp. (strain ATCC 27184 / PCC 6803 / Kazusa), this protein is Cytochrome b6-f complex subunit 5.